The chain runs to 450 residues: Phosphoglucosamine mutase (450 aa).

Residue serine 101 is the Phosphoserine intermediate of the active site. Mg(2+) is bound by residues serine 101, aspartate 240, aspartate 242, and aspartate 244. At serine 101 the chain carries Phosphoserine.

This sequence belongs to the phosphohexose mutase family. It depends on Mg(2+) as a cofactor. Activated by phosphorylation.

It carries out the reaction alpha-D-glucosamine 1-phosphate = D-glucosamine 6-phosphate. Its function is as follows. Catalyzes the conversion of glucosamine-6-phosphate to glucosamine-1-phosphate. The polypeptide is Phosphoglucosamine mutase (Streptococcus pneumoniae (strain Hungary19A-6)).